Consider the following 329-residue polypeptide: Ketol-acid reductoisomerase (NADP(+)) (329 aa).

The KARI N-terminal Rossmann domain maps to 1 to 181 (MKVYYENDAD…GATRSGVLQT (181 aa)). Residues 24–27 (YGSQ), R47, and 82–85 (DQVQ) contribute to the NADP(+) site. The active site involves H107. G133 contacts NADP(+). One can recognise a KARI C-terminal knotted domain in the interval 182 to 327 (TFREETETDL…GELRKMMSWL (146 aa)). 4 residues coordinate Mg(2+): D190, E194, E226, and E230. Position 251 (S251) interacts with substrate.

Belongs to the ketol-acid reductoisomerase family. Mg(2+) is required as a cofactor.

It catalyses the reaction (2R)-2,3-dihydroxy-3-methylbutanoate + NADP(+) = (2S)-2-acetolactate + NADPH + H(+). The enzyme catalyses (2R,3R)-2,3-dihydroxy-3-methylpentanoate + NADP(+) = (S)-2-ethyl-2-hydroxy-3-oxobutanoate + NADPH + H(+). It participates in amino-acid biosynthesis; L-isoleucine biosynthesis; L-isoleucine from 2-oxobutanoate: step 2/4. Its pathway is amino-acid biosynthesis; L-valine biosynthesis; L-valine from pyruvate: step 2/4. Its function is as follows. Involved in the biosynthesis of branched-chain amino acids (BCAA). Catalyzes an alkyl-migration followed by a ketol-acid reduction of (S)-2-acetolactate (S2AL) to yield (R)-2,3-dihydroxy-isovalerate. In the isomerase reaction, S2AL is rearranged via a Mg-dependent methyl migration to produce 3-hydroxy-3-methyl-2-ketobutyrate (HMKB). In the reductase reaction, this 2-ketoacid undergoes a metal-dependent reduction by NADPH to yield (R)-2,3-dihydroxy-isovalerate. The sequence is that of Ketol-acid reductoisomerase (NADP(+)) from Maridesulfovibrio salexigens (strain ATCC 14822 / DSM 2638 / NCIMB 8403 / VKM B-1763) (Desulfovibrio salexigens).